The primary structure comprises 285 residues: Non-homologous end joining protein Ku (285 aa).

In terms of domain architecture, Ku spans 9–176 (ISFGLVNVPV…PAEIRHLEAS (168 aa)). Residues 250–285 (AMTDQKKQQNTAESETEEKPTKSTLTPRGRRKVKGA) are disordered.

This sequence belongs to the prokaryotic Ku family. As to quaternary structure, homodimer. Interacts with LigD.

Its function is as follows. With LigD forms a non-homologous end joining (NHEJ) DNA repair enzyme, which repairs dsDNA breaks with reduced fidelity. Binds linear dsDNA with 5'- and 3'- overhangs but not closed circular dsDNA nor ssDNA. Recruits and stimulates the ligase activity of LigD. The sequence is that of Non-homologous end joining protein Ku from Desulfitobacterium hafniense (strain DSM 10664 / DCB-2).